Consider the following 124-residue polypeptide: MKISVGNDIVENARIRDLLEKHGDRFLKRIFSESEREYCSNRKDPVPHLSGRFCVKEAFIKAIEPKVVLDMREIELFGKEFGKKELVLHGKSKELFLTKGYNGCSVSISHAENYSTAVVVLYKE.

Residues aspartate 8 and glutamate 57 each contribute to the Mg(2+) site.

Belongs to the P-Pant transferase superfamily. AcpS family. Mg(2+) serves as cofactor.

It localises to the cytoplasm. The catalysed reaction is apo-[ACP] + CoA = holo-[ACP] + adenosine 3',5'-bisphosphate + H(+). Transfers the 4'-phosphopantetheine moiety from coenzyme A to a Ser of acyl-carrier-protein. This is Holo-[acyl-carrier-protein] synthase from Leptospira borgpetersenii serovar Hardjo-bovis (strain JB197).